The sequence spans 209 residues: Redox-sensing transcriptional repressor Rex (209 aa).

Positions 16-55 form a DNA-binding region, H-T-H motif; the sequence is LYYRFIQNLSLSGKQRVSSAELSEAVKVDSATIRRDFSYF. 90–95 lines the NAD(+) pocket; that stretch reads GVGNLG.

This sequence belongs to the transcriptional regulatory Rex family. Homodimer.

The protein localises to the cytoplasm. Functionally, modulates transcription in response to changes in cellular NADH/NAD(+) redox state. The protein is Redox-sensing transcriptional repressor Rex of Bacillus cereus (strain Q1).